A 359-amino-acid polypeptide reads, in one-letter code: Heat-inducible transcription repressor HrcA (359 aa).

The protein belongs to the HrcA family.

Functionally, negative regulator of class I heat shock genes (grpE-dnaK-dnaJ and groELS operons). Prevents heat-shock induction of these operons. The chain is Heat-inducible transcription repressor HrcA from Rhizobium meliloti (strain 1021) (Ensifer meliloti).